Consider the following 244-residue polypeptide: MNEKNIKHSQNFITSKHNIDKIMTNIRLNEHDNIFEIGSGKGHFTLELVKRCNFVTAIEIDHKLCKTTENKLVDHDNFQVLNKDILQFKFPKNQSYKIYGNIPYNISTDIIRKIVFDSIANEIYLIVEYGFAKRLLNTKRSLALLLMAEVDISILSMVPREYFHPKPKVNSSLIRLSRKKSRISHKDKQKYNYFVMKWVNKEYKKIFTKNQFNNSLKHAGIDDLNNISFEQFLSLFNSYKLFNK.

Asn-11, Ile-13, Gly-38, Glu-59, Asp-84, and Asn-101 together coordinate S-adenosyl-L-methionine.

This sequence belongs to the class I-like SAM-binding methyltransferase superfamily. rRNA adenine N(6)-methyltransferase family.

It catalyses the reaction adenosine(2085) in 23S rRNA + 2 S-adenosyl-L-methionine = N(6)-dimethyladenosine(2085) in 23S rRNA + 2 S-adenosyl-L-homocysteine + 2 H(+). Its function is as follows. This protein produces a dimethylation of the adenine residue at position 2085 in 23S rRNA, resulting in reduced affinity between ribosomes and macrolide-lincosamide-streptogramin B antibiotics. This Staphylococcus aureus protein is rRNA adenine N-6-methyltransferase (ermC).